The primary structure comprises 399 residues: Tyrosine--tRNA ligase 2 (399 aa).

The short motif at 43 to 52 (PTAPDLHLGH) is the 'HIGH' region element. The 'KMSKS' region signature appears at 227–231 (KMSKS). K230 provides a ligand contact to ATP. The 61-residue stretch at 338–398 (ITLLDLCSVA…IGKRYKFRIG (61 aa)) folds into the S4 RNA-binding domain.

It belongs to the class-I aminoacyl-tRNA synthetase family. TyrS type 2 subfamily. In terms of assembly, homodimer.

The protein resides in the cytoplasm. The enzyme catalyses tRNA(Tyr) + L-tyrosine + ATP = L-tyrosyl-tRNA(Tyr) + AMP + diphosphate + H(+). Its function is as follows. Catalyzes the attachment of tyrosine to tRNA(Tyr) in a two-step reaction: tyrosine is first activated by ATP to form Tyr-AMP and then transferred to the acceptor end of tRNA(Tyr). The protein is Tyrosine--tRNA ligase 2 of Photorhabdus laumondii subsp. laumondii (strain DSM 15139 / CIP 105565 / TT01) (Photorhabdus luminescens subsp. laumondii).